The sequence spans 104 residues: Ribonuclease P protein component 4 (104 aa).

4 residues coordinate Zn(2+): Cys63, Cys66, Cys89, and Cys92.

This sequence belongs to the eukaryotic/archaeal RNase P protein component 4 family. Consists of a catalytic RNA component and at least 4-5 protein subunits. Zn(2+) serves as cofactor.

The protein resides in the cytoplasm. The enzyme catalyses Endonucleolytic cleavage of RNA, removing 5'-extranucleotides from tRNA precursor.. Part of ribonuclease P, a protein complex that generates mature tRNA molecules by cleaving their 5'-ends. The protein is Ribonuclease P protein component 4 of Methanoregula boonei (strain DSM 21154 / JCM 14090 / 6A8).